The sequence spans 303 residues: Oxygen-dependent coproporphyrinogen-III oxidase (303 aa).

Residue S93 coordinates substrate. A divalent metal cation is bound by residues H97 and H107. Catalysis depends on H107, which acts as the Proton donor. A substrate-binding site is contributed by N109–R111. Residues H146 and H176 each contribute to the a divalent metal cation site. Residues Y241–G276 are important for dimerization. G259–R261 lines the substrate pocket.

The protein belongs to the aerobic coproporphyrinogen-III oxidase family. Homodimer. A divalent metal cation is required as a cofactor.

It is found in the cytoplasm. It catalyses the reaction coproporphyrinogen III + O2 + 2 H(+) = protoporphyrinogen IX + 2 CO2 + 2 H2O. The protein operates within porphyrin-containing compound metabolism; protoporphyrin-IX biosynthesis; protoporphyrinogen-IX from coproporphyrinogen-III (O2 route): step 1/1. Involved in the heme biosynthesis. Catalyzes the aerobic oxidative decarboxylation of propionate groups of rings A and B of coproporphyrinogen-III to yield the vinyl groups in protoporphyrinogen-IX. This is Oxygen-dependent coproporphyrinogen-III oxidase from Pseudomonas putida (strain GB-1).